The chain runs to 349 residues: Methylthioribose-1-phosphate isomerase (349 aa).

Substrate contacts are provided by residues 49-51, arginine 93, and glutamine 201; that span reads RGA. The Proton donor role is filled by aspartate 242. 252–253 contacts substrate; sequence NK.

Belongs to the EIF-2B alpha/beta/delta subunits family. MtnA subfamily.

The catalysed reaction is 5-(methylsulfanyl)-alpha-D-ribose 1-phosphate = 5-(methylsulfanyl)-D-ribulose 1-phosphate. It participates in amino-acid biosynthesis; L-methionine biosynthesis via salvage pathway; L-methionine from S-methyl-5-thio-alpha-D-ribose 1-phosphate: step 1/6. Catalyzes the interconversion of methylthioribose-1-phosphate (MTR-1-P) into methylthioribulose-1-phosphate (MTRu-1-P). The chain is Methylthioribose-1-phosphate isomerase from Petrotoga mobilis (strain DSM 10674 / SJ95).